A 194-amino-acid chain; its full sequence is UPF0215 protein TV0037 (194 aa).

The protein belongs to the UPF0215 family.

The polypeptide is UPF0215 protein TV0037 (Thermoplasma volcanium (strain ATCC 51530 / DSM 4299 / JCM 9571 / NBRC 15438 / GSS1)).